Here is a 391-residue protein sequence, read N- to C-terminus: MEGAFAANWSAEAVNGSAAPPGTEGNRTAGPPQRNEALARVEVAVLCLILFLALSGNACVLLALRTTRHKHSRLFFFMKHLSIADLVVAVFQVLPQLLWDITFRFYGPDLLCRLVKYLQVVGMFASTYLLLLMSLDRCLAICQPLRSLSRRTDRLAVLVTWLGCLVASAPQVHIFSLREVADGVFDCWAVFIQPWGPKAYITWITLAVYIVPVIVLATCYGLISFKIWQNLRLKTAAAAAEAAAGAEGEAADWAGRAILARVSNVKLISKAKIRTVKMTFIVVLAFIVCWTPFFFVQMWSVWDADAPKEASPFIIAMLLASLNSCCNPWIYMLFTGHLFQELVQRFLCCSFRRLKGSRPGETSVSKKSNSSTFVLSQYSSSQRRCSQPSTL.

Residues 1 to 38 (MEGAFAANWSAEAVNGSAAPPGTEGNRTAGPPQRNEAL) are Extracellular-facing. N-linked (GlcNAc...) asparagine glycans are attached at residues Asn-8, Asn-15, and Asn-26. The chain crosses the membrane as a helical span at residues 39 to 63 (ARVEVAVLCLILFLALSGNACVLLA). Residues 64–74 (LRTTRHKHSRL) lie on the Cytoplasmic side of the membrane. Residues 75 to 97 (FFFMKHLSIADLVVAVFQVLPQL) traverse the membrane as a helical segment. Residues 98 to 113 (LWDITFRFYGPDLLCR) lie on the Extracellular side of the membrane. Cys-112 and Cys-187 are disulfide-bonded. A helical membrane pass occupies residues 114 to 135 (LVKYLQVVGMFASTYLLLLMSL). The Cytoplasmic portion of the chain corresponds to 136–154 (DRCLAICQPLRSLSRRTDR). Residues 155-175 (LAVLVTWLGCLVASAPQVHIF) form a helical membrane-spanning segment. Residues 176-202 (SLREVADGVFDCWAVFIQPWGPKAYIT) lie on the Extracellular side of the membrane. The helical transmembrane segment at 203-225 (WITLAVYIVPVIVLATCYGLISF) threads the bilayer. Topologically, residues 226-277 (KIWQNLRLKTAAAAAEAAAGAEGEAADWAGRAILARVSNVKLISKAKIRTVK) are cytoplasmic. The chain crosses the membrane as a helical span at residues 278-296 (MTFIVVLAFIVCWTPFFFV). Topologically, residues 297–311 (QMWSVWDADAPKEAS) are extracellular. The helical transmembrane segment at 312–334 (PFIIAMLLASLNSCCNPWIYMLF) threads the bilayer. Over 335-391 (TGHLFQELVQRFLCCSFRRLKGSRPGETSVSKKSNSSTFVLSQYSSSQRRCSQPSTL) the chain is Cytoplasmic. Residues Ser-368 and Ser-370 each carry the phosphoserine modification.

It belongs to the G-protein coupled receptor 1 family. Vasopressin/oxytocin receptor subfamily.

The protein localises to the cell membrane. Functionally, receptor for oxytocin. The activity of this receptor is mediated by G proteins which activate a phosphatidylinositol-calcium second messenger system. The chain is Oxytocin receptor (OXTR) from Bos taurus (Bovine).